The following is an 804-amino-acid chain: Leucine--tRNA ligase (804 aa).

A 'HIGH' region motif is present at residues 39–50 (PFPSGKGLHVGH). The short motif at 573–577 (KMSKS) is the 'KMSKS' region element. Lys-576 is an ATP binding site.

The protein belongs to the class-I aminoacyl-tRNA synthetase family.

Its subcellular location is the cytoplasm. The catalysed reaction is tRNA(Leu) + L-leucine + ATP = L-leucyl-tRNA(Leu) + AMP + diphosphate. The polypeptide is Leucine--tRNA ligase (Lactobacillus helveticus (strain DPC 4571)).